Reading from the N-terminus, the 374-residue chain is Pectate lyase 1 (374 aa).

An N-terminal signal peptide occupies residues 1 to 21; that stretch reads MDSPCLVALLVFSFVIGSCFS. Intrachain disulfides connect Cys-28–Cys-45 and Cys-128–Cys-147. Residue Asn-158 is glycosylated (N-linked (GlcNAc...) asparagine). Residue Asp-170 participates in Ca(2+) binding. A glycan (N-linked (GlcNAc...) (complex) asparagine) is linked at Asn-191. Ca(2+) is bound by residues Asp-194 and Asp-198. Residue Arg-250 is part of the active site. Asn-293 carries N-linked (GlcNAc...) asparagine glycosylation. Cys-306 and Cys-312 are joined by a disulfide. Asn-354 carries N-linked (GlcNAc...) (complex) asparagine glycosylation.

It belongs to the polysaccharide lyase 1 family. Amb a subfamily. It depends on Ca(2+) as a cofactor. N-glycosylated; contains fucose and xylose.

The catalysed reaction is Eliminative cleavage of (1-&gt;4)-alpha-D-galacturonan to give oligosaccharides with 4-deoxy-alpha-D-galact-4-enuronosyl groups at their non-reducing ends.. Its pathway is glycan metabolism; pectin degradation; 2-dehydro-3-deoxy-D-gluconate from pectin: step 2/5. In terms of biological role, has pectate lyase activity. This Cryptomeria japonica (Japanese cedar) protein is Pectate lyase 1.